A 177-amino-acid chain; its full sequence is Large ribosomal subunit protein uL6 (177 aa).

It belongs to the universal ribosomal protein uL6 family. Part of the 50S ribosomal subunit.

Its function is as follows. This protein binds to the 23S rRNA, and is important in its secondary structure. It is located near the subunit interface in the base of the L7/L12 stalk, and near the tRNA binding site of the peptidyltransferase center. The sequence is that of Large ribosomal subunit protein uL6 from Chromobacterium violaceum (strain ATCC 12472 / DSM 30191 / JCM 1249 / CCUG 213 / NBRC 12614 / NCIMB 9131 / NCTC 9757 / MK).